The following is an 84-amino-acid chain: UPF0297 protein NT01CX_2279 (84 aa).

Belongs to the UPF0297 family.

This chain is UPF0297 protein NT01CX_2279, found in Clostridium novyi (strain NT).